The sequence spans 363 residues: LIM and cysteine-rich domains protein 1 (363 aa).

Phosphoserine is present on serine 16. Positions 99–206 (MIMTNPIATG…GEVALPGQGG (108 aa)) constitute a PET domain. The interval 200–233 (ALPGQGGLPKEEGKQQEKPEGAETAAPTANGSLG) is disordered. Residues 208-220 (PKEEGKQQEKPEG) are compositionally biased toward basic and acidic residues. LIM zinc-binding domains lie at 239 to 304 (YVCE…SLRP) and 305 to 363 (RCSG…SKRT).

As to quaternary structure, interacts with beta-dystroglycan. Interacts with GATA1, GATA4 and GATA6. Highly expressed in both skeletal muscle and cardiac muscle.

Its subcellular location is the cytoplasm. It is found in the nucleus. In terms of biological role, transcriptional cofactor that restricts GATA6 function by inhibiting DNA-binding, resulting in repression of GATA6 transcriptional activation of downstream target genes. Represses GATA6-mediated trans activation of lung- and cardiac tissue-specific promoters. Inhibits DNA-binding by GATA4 and GATA1 to the cTNC promoter. Plays a critical role in the development of cardiac hypertrophy via activation of calcineurin/nuclear factor of activated T-cells signaling pathway. This Sus scrofa (Pig) protein is LIM and cysteine-rich domains protein 1 (LMCD1).